A 95-amino-acid chain; its full sequence is Acylphosphatase (95 aa).

The Acylphosphatase-like domain occupies 5–93; the sequence is RAHLFIRGKV…GEFQDFRILP (89 aa). Active-site residues include Arg-20 and Asn-38.

This sequence belongs to the acylphosphatase family.

It carries out the reaction an acyl phosphate + H2O = a carboxylate + phosphate + H(+). The sequence is that of Acylphosphatase (acyP) from Pyrobaculum arsenaticum (strain DSM 13514 / JCM 11321 / PZ6).